The sequence spans 429 residues: Glutamate-1-semialdehyde 2,1-aminomutase 2 (429 aa).

K268 bears the N6-(pyridoxal phosphate)lysine mark.

Belongs to the class-III pyridoxal-phosphate-dependent aminotransferase family. HemL subfamily. As to quaternary structure, homodimer. Pyridoxal 5'-phosphate is required as a cofactor.

The protein resides in the cytoplasm. It catalyses the reaction (S)-4-amino-5-oxopentanoate = 5-aminolevulinate. Its pathway is porphyrin-containing compound metabolism; protoporphyrin-IX biosynthesis; 5-aminolevulinate from L-glutamyl-tRNA(Glu): step 2/2. The sequence is that of Glutamate-1-semialdehyde 2,1-aminomutase 2 from Bacillus cereus (strain B4264).